The primary structure comprises 344 residues: AI-2 transport protein TqsA (344 aa).

At M1–P4 the chain is on the cytoplasmic side. The helical transmembrane segment at I5–C25 threads the bilayer. At G26–A30 the chain is on the periplasmic side. Residues A31–V51 traverse the membrane as a helical segment. The Cytoplasmic segment spans residues Q52–R61. A helical transmembrane segment spans residues V62 to Y82. Residues L83–S149 lie on the Periplasmic side of the membrane. The helical transmembrane segment at S150–G170 threads the bilayer. Residues K171–Y196 lie on the Cytoplasmic side of the membrane. A helical transmembrane segment spans residues L197–A217. The Periplasmic portion of the chain corresponds to L218 to R221. The helical transmembrane segment at F222–V242 threads the bilayer. The Cytoplasmic portion of the chain corresponds to L243–G257. A helical membrane pass occupies residues F258–I278. Topologically, residues L279–T292 are periplasmic. A helical membrane pass occupies residues L293–L313. Residues S314–E344 lie on the Cytoplasmic side of the membrane.

It belongs to the autoinducer-2 exporter (AI-2E) (TC 2.A.86) family.

It is found in the cell inner membrane. It catalyses the reaction (2R,4S)-2-methyltetrahydrofuran-2,3,3,4-tetrol(in) = (2R,4S)-2-methyltetrahydrofuran-2,3,3,4-tetrol(out). Functionally, involved in the transport of the quorum-sensing signal autoinducer 2 (AI-2). Controls the transport of AI-2 either by enhancing its secretion or inhibiting its uptake and consequently represses biofilm formation and motility and affects the global gene expression in biofilms. The polypeptide is AI-2 transport protein TqsA (Escherichia coli (strain K12)).